A 265-amino-acid chain; its full sequence is Hydroxyethylthiazole kinase (265 aa).

Met-50 serves as a coordination point for substrate. ATP contacts are provided by Arg-125 and Thr-171. Gly-198 is a binding site for substrate.

Belongs to the Thz kinase family. Mg(2+) is required as a cofactor.

It carries out the reaction 5-(2-hydroxyethyl)-4-methylthiazole + ATP = 4-methyl-5-(2-phosphooxyethyl)-thiazole + ADP + H(+). The protein operates within cofactor biosynthesis; thiamine diphosphate biosynthesis; 4-methyl-5-(2-phosphoethyl)-thiazole from 5-(2-hydroxyethyl)-4-methylthiazole: step 1/1. Its function is as follows. Catalyzes the phosphorylation of the hydroxyl group of 4-methyl-5-beta-hydroxyethylthiazole (THZ). The sequence is that of Hydroxyethylthiazole kinase from Salmonella paratyphi B (strain ATCC BAA-1250 / SPB7).